The chain runs to 312 residues: MRIAFLGTPAFAVAALDALERAGHALVTVVAQPDRPAGRGQALREPATKAWARARGVPVLQPEKVRDGTLAAALRALAPDALVVAAYGRILGKDLLTLAPHGALNVHGSLLPRWRGAAPIQWAVAEGERETGVTIMQMDEGLDTGDVLLQRALEIGEDDTSETLAPRLAALGGEALVEALRLLEAGALVPVRQDAAQATLARILEKEDGRIAWTRPARRISDRLRGFTPWPGAFTTLEGRTLKVLEARPGADVATPAGEPGEAEVVPGRGLAVACGGGSALLVTRVQLEGRPAQSALDLANGLRRKRFRLGT.

109–112 lines the (6S)-5,6,7,8-tetrahydrofolate pocket; sequence SLLP.

It belongs to the Fmt family.

The catalysed reaction is L-methionyl-tRNA(fMet) + (6R)-10-formyltetrahydrofolate = N-formyl-L-methionyl-tRNA(fMet) + (6S)-5,6,7,8-tetrahydrofolate + H(+). Functionally, attaches a formyl group to the free amino group of methionyl-tRNA(fMet). The formyl group appears to play a dual role in the initiator identity of N-formylmethionyl-tRNA by promoting its recognition by IF2 and preventing the misappropriation of this tRNA by the elongation apparatus. The polypeptide is Methionyl-tRNA formyltransferase (Anaeromyxobacter dehalogenans (strain 2CP-1 / ATCC BAA-258)).